Reading from the N-terminus, the 247-residue chain is ATP synthase subunit a, chloroplastic (247 aa).

The next 5 membrane-spanning stretches (helical) occupy residues 38-58, 95-115, 134-154, 199-219, and 220-240; these read QVLI…TLAV, VPFI…GALL, INTT…AGLS, LVVV…VMFL, and GLFT…AYIG.

It belongs to the ATPase A chain family. F-type ATPases have 2 components, CF(1) - the catalytic core - and CF(0) - the membrane proton channel. CF(1) has five subunits: alpha(3), beta(3), gamma(1), delta(1), epsilon(1). CF(0) has four main subunits: a, b, b' and c.

The protein localises to the plastid. It is found in the chloroplast thylakoid membrane. Key component of the proton channel; it plays a direct role in the translocation of protons across the membrane. The polypeptide is ATP synthase subunit a, chloroplastic (Lactuca sativa (Garden lettuce)).